The sequence spans 289 residues: MSSHAEPTPVARNRKPLTLPALRAMQQRGEKIAMLTAYESTLARVADEAGVDTILVGDSLGMVVQGHASTLPVTLDEMAYHTRCVARGLQGGAAWLVADLPFASYHQGPSQAMAAAATLMQAGAQMIKLEGGGWTAETVRFLVERGVPVCAHLGLTPQSVHALGGYRIQGRDEAGAAELRRQATELTQAGAAMMVLELMPSAVAAAVQADNPQLMTIGIGAGPATAGQVLVVHDMLGLTRGKLPRFVRNFMHSEAGQNLSVEDAIRAYVAAVKDASFPDPVAHAYASAS.

Mg(2+) contacts are provided by aspartate 58 and aspartate 99. 3-methyl-2-oxobutanoate contacts are provided by residues 58-59, aspartate 99, and lysine 128; that span reads DS. Glutamate 130 serves as a coordination point for Mg(2+). Residue glutamate 197 is the Proton acceptor of the active site.

This sequence belongs to the PanB family. As to quaternary structure, homodecamer; pentamer of dimers. It depends on Mg(2+) as a cofactor.

The protein resides in the cytoplasm. The enzyme catalyses 3-methyl-2-oxobutanoate + (6R)-5,10-methylene-5,6,7,8-tetrahydrofolate + H2O = 2-dehydropantoate + (6S)-5,6,7,8-tetrahydrofolate. It functions in the pathway cofactor biosynthesis; (R)-pantothenate biosynthesis; (R)-pantoate from 3-methyl-2-oxobutanoate: step 1/2. In terms of biological role, catalyzes the reversible reaction in which hydroxymethyl group from 5,10-methylenetetrahydrofolate is transferred onto alpha-ketoisovalerate to form ketopantoate. In Leptothrix cholodnii (strain ATCC 51168 / LMG 8142 / SP-6) (Leptothrix discophora (strain SP-6)), this protein is 3-methyl-2-oxobutanoate hydroxymethyltransferase.